The chain runs to 505 residues: Glutamyl-tRNA(Gln) amidotransferase subunit A (505 aa).

Residues K80 and S155 each act as charge relay system in the active site. Residue S179 is the Acyl-ester intermediate of the active site.

Belongs to the amidase family. GatA subfamily. As to quaternary structure, heterotrimer of A, B and C subunits.

It catalyses the reaction L-glutamyl-tRNA(Gln) + L-glutamine + ATP + H2O = L-glutaminyl-tRNA(Gln) + L-glutamate + ADP + phosphate + H(+). In terms of biological role, allows the formation of correctly charged Gln-tRNA(Gln) through the transamidation of misacylated Glu-tRNA(Gln) in organisms which lack glutaminyl-tRNA synthetase. The reaction takes place in the presence of glutamine and ATP through an activated gamma-phospho-Glu-tRNA(Gln). This chain is Glutamyl-tRNA(Gln) amidotransferase subunit A, found in Acidothermus cellulolyticus (strain ATCC 43068 / DSM 8971 / 11B).